Reading from the N-terminus, the 211-residue chain is ATP phosphoribosyltransferase (211 aa).

The protein belongs to the ATP phosphoribosyltransferase family. Short subfamily. Heteromultimer composed of HisG and HisZ subunits.

It is found in the cytoplasm. It carries out the reaction 1-(5-phospho-beta-D-ribosyl)-ATP + diphosphate = 5-phospho-alpha-D-ribose 1-diphosphate + ATP. Its pathway is amino-acid biosynthesis; L-histidine biosynthesis; L-histidine from 5-phospho-alpha-D-ribose 1-diphosphate: step 1/9. Functionally, catalyzes the condensation of ATP and 5-phosphoribose 1-diphosphate to form N'-(5'-phosphoribosyl)-ATP (PR-ATP). Has a crucial role in the pathway because the rate of histidine biosynthesis seems to be controlled primarily by regulation of HisG enzymatic activity. This Clostridium botulinum (strain 657 / Type Ba4) protein is ATP phosphoribosyltransferase.